The following is a 389-amino-acid chain: Pregnancy-associated glycoprotein 1 (389 aa).

The N-terminal stretch at 1-15 (MKWLVILGLVALSEC) is a signal peptide. Residues 76 to 386 (YVGNITIGTP…DRGQNRIGLR (311 aa)) form the Peptidase A1 domain. N-linked (GlcNAc...) asparagine glycosylation occurs at Asn79. The active site involves Asp94. A disulfide bridge links Cys107 with Cys112. Asn130 is a glycosylation site (N-linked (GlcNAc...) asparagine). A disulfide bond links Cys268 and Cys272. Asp277 is an active-site residue. Cys311 and Cys345 are disulfide-bonded. N-linked (GlcNAc...) asparagine glycosylation is present at Asn348.

This sequence belongs to the peptidase A1 family. Expressed throughout the chorion, with the signal localized exclusively over the trophectoderm.

The protein localises to the secreted. It localises to the extracellular space. In terms of biological role, appears to be proteolytically inactive. In Sus scrofa (Pig), this protein is Pregnancy-associated glycoprotein 1.